The following is a 150-amino-acid chain: MKVSRHAKILEIINSKDIDTQEELAEELKKMGMNVTQATVSRDIKELKLIKVLGNTGKYKYATINHTESYMSDKLINIFAQTVINVENIDKLIIIKAISGSAPAAAEAIDTLGFDGVAGTIAGDNTIFVMARTNEKAQEITMKLKKIINA.

It belongs to the ArgR family.

It is found in the cytoplasm. It participates in amino-acid biosynthesis; L-arginine biosynthesis [regulation]. In terms of biological role, regulates arginine biosynthesis genes. The protein is Arginine repressor of Clostridium botulinum (strain Loch Maree / Type A3).